Here is a 179-residue protein sequence, read N- to C-terminus: Transmembrane protein 196 (179 aa).

4 helical membrane passes run 11–31, 44–61, 67–87, and 100–120; these read LLVLSVLEIGLGVSSVAVGAV, LGDSSPFLLCGICGILCA, LVMILFSACCICGLIGGILNF, and LYPLHLASMSLACIGIGGCTL.

The protein localises to the cytoplasm. The protein resides in the membrane. Functionally, acts as a tumor suppressor in lung cancer. Inhibits tumor cell growth by inhibiting cell proliferation and migration and promoting cell apoptosis. Inhibits metastasis of lung cancer by suppressing beta-catenin expression in the Wnt/beta-catenin signaling pathway. In Pongo abelii (Sumatran orangutan), this protein is Transmembrane protein 196 (TMEM196).